Consider the following 312-residue polypeptide: Malate dehydrogenase (312 aa).

Residues 12–17 (GAGFTG) and D36 contribute to the NAD(+) site. Residues R87 and R93 each coordinate substrate. NAD(+) contacts are provided by residues N100 and 123–125 (LTN). Residue N125 coordinates substrate. S149 bears the Phosphoserine mark. Residue R156 participates in substrate binding. Residue H180 is the Proton acceptor of the active site.

This sequence belongs to the LDH/MDH superfamily. MDH type 3 family. As to quaternary structure, homotetramer.

It carries out the reaction (S)-malate + NAD(+) = oxaloacetate + NADH + H(+). In terms of biological role, catalyzes the reversible oxidation of malate to oxaloacetate. In Bacillus israeli, this protein is Malate dehydrogenase.